Here is a 421-residue protein sequence, read N- to C-terminus: C2H2 type master regulator of conidiophore development brlA (421 aa).

A compositionally biased stretch (polar residues) spans 228-242 (THSPTTPLRSCSIGT). Residues 228–247 (THSPTTPLRSCSIGTASGPD) are disordered. 2 C2H2-type zinc fingers span residues 309 to 333 (FKCKEPGCKGRFKRQEHLKRHMKSH) and 339 to 364 (HVCWVPGCERAFSRSDNLNAHYTKTH). Residues 361 to 370 (TKTHSKRGGR) are compositionally biased toward basic residues. The segment at 361–421 (TKTHSKRGGR…REYSVDGLDD (61 aa)) is disordered.

The protein resides in the nucleus. Functionally, brlA, abaA and wetA are pivotal regulators of conidiophore development and conidium maturation. They act individually and together to regulate their own expression and that of numerous other sporulation-specific genes. Binds promoters of target genes at brlA response elements (BREs) containing the conserved sequence 5'-(C/A)(A/G)AGGG(G/A)-3'. This is C2H2 type master regulator of conidiophore development brlA from Aspergillus parasiticus (strain ATCC 56775 / NRRL 5862 / SRRC 143 / SU-1).